A 559-amino-acid polypeptide reads, in one-letter code: 3-phosphoinositide-dependent protein kinase 1 (559 aa).

Tyr9 bears the Phosphotyrosine; by SRC and INSR mark. The residue at position 25 (Ser25) is a Phosphoserine. The interval 25–83 (SPSMVRSQTEPGSSPGIPSGVSRQGSTMDGTTAEARPSTNPLQQHPAQLPPQPRKKRPE) is disordered. Residues 35-44 (PGSSPGIPSG) show a composition bias toward low complexity. Residues 45 to 54 (VSRQGSTMDG) are compositionally biased toward polar residues. In terms of domain architecture, Protein kinase spans 85–345 (FKFGKILGEG…YGPLKAHPFF (261 aa)). Residues 95-97 (SFS) and Lys114 contribute to the ATP site. A PIF-pocket region spans residues 116–160 (LEKRHIIKENKVPYVTRERDVMSRLDHPFFVKLYFTFQDDEKLYF). ATP is bound by residues 163–165 (SYA) and Glu169. Asp208 serves as the catalytic Proton acceptor. Residues Glu212 and Asp226 each contribute to the ATP site. Ser244 is subject to Phosphoserine. Lys307 carries the N6-acetyllysine modification. Thr357 bears the Phosphothreonine; by MELK mark. Residues Tyr376 and Tyr379 each carry the phosphotyrosine; by SRC and INSR modification. Phosphoserine is present on Ser396. Ser397 bears the Phosphoserine; by MAP3K5 mark. At Ser399 the chain carries Phosphoserine. Ser401 bears the Phosphoserine; by MAP3K5 mark. Ser413 is subject to Phosphoserine. One can recognise a PH domain in the interval 462-553 (KMGPVDKRKG…EVWRQQYQSN (92 aa)). Ser504 is modified (phosphoserine; by PKC/PRKCQ). Thr516 bears the Phosphothreonine; by autocatalysis mark. The residue at position 532 (Ser532) is a Phosphoserine; by PKC/PRKCQ.

This sequence belongs to the protein kinase superfamily. AGC Ser/Thr protein kinase family. PDPK1 subfamily. Homodimer in its autoinhibited state. Active as monomer. Interacts with NPRL2, PAK1, PTK2B, GRB14, STRAP and IKKB. The Tyr-9 phosphorylated form interacts with SRC, RASA1 and CRK (via their SH2 domains). Interacts with SGK3 in a phosphorylation-dependent manner. The tyrosine-phosphorylated form interacts with PTPN6. The Ser-244 phosphorylated form interacts with YWHAH and YWHAQ. Binds INSR in response to insulin. Interacts (via PH domain) with SMAD3, SMAD4 and SMAD7. Interacts with PKN2; the interaction stimulates PDPK1 autophosphorylation, its PI(3,4,5)P3-dependent kinase activity toward 'Ser-473' of AKT1 but also activates its kinase activity toward PRKCD and PRKCZ. Interacts with PKN1 (via C-terminus) and PPARG. Phosphorylation on Ser-244 in the activation loop is required for full activity. PDPK1 itself can autophosphorylate Ser-244, leading to its own activation. Autophosphorylation is inhibited by the apoptotic C-terminus cleavage product of PKN2. Tyr-9 phosphorylation is critical for stabilization of both PDPK1 and the PDPK1/SRC complex via HSP90-mediated protection of PDPK1 degradation. Angiotensin II stimulates the tyrosine phosphorylation of PDPK1 in vascular smooth muscle in a calcium- and SRC-dependent manner. Phosphorylated on Tyr-9, Tyr-376 and Tyr-379 by INSR in response to insulin. Palmitate negatively regulates autophosphorylation at Ser-244 and palmitate-induced phosphorylation at Ser-532 and Ser-504 by PKC/PRKCQ negatively regulates its ability to phosphorylate PKB/AKT1. Phosphorylation at Thr-357 by MELK partially inhibits kinase activity, the inhibition is cooperatively enhanced by phosphorylation at Ser-397 and Ser-401 by MAP3K5. Post-translationally, monoubiquitinated in the kinase domain, deubiquitinated by USP4. As to expression, highly expressed in heart, brain, liver and testis, also expressed in embryonic cells.

It is found in the cytoplasm. Its subcellular location is the nucleus. It localises to the cell membrane. The protein localises to the cell junction. The protein resides in the focal adhesion. The catalysed reaction is L-seryl-[protein] + ATP = O-phospho-L-seryl-[protein] + ADP + H(+). The enzyme catalyses L-threonyl-[protein] + ATP = O-phospho-L-threonyl-[protein] + ADP + H(+). Homodimerization regulates its activity by maintaining the kinase in an autoinhibitory conformation. NPRL2 down-regulates its activity by interfering with tyrosine phosphorylation at the Tyr-9, Tyr-376 and Tyr-379 residues. The 14-3-3 protein YWHAQ acts as a negative regulator by association with the residues surrounding the Ser-244 residue. STRAP positively regulates its activity by enhancing its autophosphorylation and by stimulating its dissociation from YWHAQ. SMAD2, SMAD3, SMAD4 and SMAD7 also positively regulate its activity by stimulating its dissociation from YWHAQ. Activated by phosphorylation on Tyr-9, Tyr-376 and Tyr-379 by INSR in response to insulin. Serine/threonine kinase which acts as a master kinase, phosphorylating and activating a subgroup of the AGC family of protein kinases. Its targets include: protein kinase B (PKB/AKT1, PKB/AKT2, PKB/AKT3), p70 ribosomal protein S6 kinase (RPS6KB1), p90 ribosomal protein S6 kinase (RPS6KA1, RPS6KA2 and RPS6KA3), cyclic AMP-dependent protein kinase (PRKACA), protein kinase C (PRKCD and PRKCZ), serum and glucocorticoid-inducible kinase (SGK1, SGK2 and SGK3), p21-activated kinase-1 (PAK1), TSSK3, protein kinase PKN (PKN1 and PKN2). Plays a central role in the transduction of signals from insulin by providing the activating phosphorylation to PKB/AKT1, thus propagating the signal to downstream targets controlling cell proliferation and survival, as well as glucose and amino acid uptake and storage. Negatively regulates the TGF-beta-induced signaling by: modulating the association of SMAD3 and SMAD7 with TGF-beta receptor, phosphorylating SMAD2, SMAD3, SMAD4 and SMAD7, preventing the nuclear translocation of SMAD3 and SMAD4 and the translocation of SMAD7 from the nucleus to the cytoplasm in response to TGF-beta. Activates PPARG transcriptional activity and promotes adipocyte differentiation. Activates the NF-kappa-B pathway via phosphorylation of IKKB. The tyrosine phosphorylated form is crucial for the regulation of focal adhesions by angiotensin II. Controls proliferation, survival, and growth of developing pancreatic cells. Participates in the regulation of Ca(2+) entry and Ca(2+)-activated K(+) channels of mast cells. Essential for the motility of vascular endothelial cells (ECs) and is involved in the regulation of their chemotaxis. Plays a critical role in cardiac homeostasis by serving as a dual effector for cell survival and beta-adrenergic response. Plays an important role during thymocyte development by regulating the expression of key nutrient receptors on the surface of pre-T cells and mediating Notch-induced cell growth and proliferative responses. Provides negative feedback inhibition to toll-like receptor-mediated NF-kappa-B activation in macrophages. This Mus musculus (Mouse) protein is 3-phosphoinositide-dependent protein kinase 1 (Pdpk1).